A 443-amino-acid polypeptide reads, in one-letter code: Ribitol-5-phosphate xylosyltransferase 1 (443 aa).

Residues 1 to 9 (MRLTRKRLC) lie on the Cytoplasmic side of the membrane. The helical; Signal-anchor for type II membrane protein transmembrane segment at 10 to 30 (SFLIALYCLFSLYAAYHVFFG) threads the bilayer. The Extracellular portion of the chain corresponds to 31-443 (RRRQAPAGSP…ESSFLMNNKS (413 aa)). Residues 35–76 (APAGSPRGLRKGAAPARERRGREQSTLESEEWNPWEGDEKNE) form a disordered region. A compositionally biased stretch (basic and acidic residues) spans 50–59 (ARERRGREQS).

Belongs to the RXYLT1 family. As to quaternary structure, forms a complex composed of FKTN/fukutin, FKRP and RXYLT1/TMEM5.

The protein resides in the golgi apparatus membrane. It carries out the reaction 3-O-[Rib-ol-P-Rib-ol-P-3-beta-D-GalNAc-(1-&gt;3)-beta-D-GlcNAc-(1-&gt;4)-(O-6-P-alpha-D-Man)]-Thr-[protein] + UDP-alpha-D-xylose = 3-O-[beta-D-Xyl-(1-&gt;4)-Rib-ol-P-Rib-ol-P-3-beta-D-GalNAc-(1-&gt;3)-beta-D-GlcNAc-(1-&gt;4)-(O-6-P-alpha-D-Man)]-Thr-[protein] + UDP + H(+). It participates in protein modification; protein glycosylation. Functionally, acts as a UDP-D-xylose:ribitol-5-phosphate beta1,4-xylosyltransferase, which catalyzes the transfer of UDP-D-xylose to ribitol 5-phosphate (Rbo5P) to form the Xylbeta1-4Rbo5P linkage on O-mannosyl glycan. Participates in the biosynthesis of the phosphorylated O-mannosyl trisaccharide (N-acetylgalactosamine-beta-3-N-acetylglucosamine-beta-4-(phosphate-6-)mannose), a carbohydrate structure present in alpha-dystroglycan (DAG1), which is required for binding laminin G-like domain-containing extracellular proteins with high affinity. The sequence is that of Ribitol-5-phosphate xylosyltransferase 1 from Homo sapiens (Human).